A 102-amino-acid polypeptide reads, in one-letter code: Large ribosomal subunit protein uL24 (102 aa).

Belongs to the universal ribosomal protein uL24 family. In terms of assembly, part of the 50S ribosomal subunit.

Functionally, one of two assembly initiator proteins, it binds directly to the 5'-end of the 23S rRNA, where it nucleates assembly of the 50S subunit. Its function is as follows. One of the proteins that surrounds the polypeptide exit tunnel on the outside of the subunit. In Leuconostoc mesenteroides subsp. mesenteroides (strain ATCC 8293 / DSM 20343 / BCRC 11652 / CCM 1803 / JCM 6124 / NCDO 523 / NBRC 100496 / NCIMB 8023 / NCTC 12954 / NRRL B-1118 / 37Y), this protein is Large ribosomal subunit protein uL24.